We begin with the raw amino-acid sequence, 203 residues long: MSAFKKSGSKSETSKKLVVVGDGGCGKTCLLIVFSSGTFPERYVPTVFENYITDITYGPNSKVIELALWDTAGQEEYDRLRPLSYPNSNVILLCFSIDCPASLNNVTEKWYPEVQHFCPRTPIVLVGLKADLRKDRNATEVLRTQGLTPVTYQQAQSVALSMNAPYVECSAKENTGVNEVFQLAVGLTIKKSFSFSKKSCVIL.

Residue 21 to 28 (GDGGCGKT) participates in GTP binding. The short motif at 43-51 (YVPTVFENY) is the Effector region element. Residue 70 to 74 (DTAGQ) coordinates GTP. Position 200 is a cysteine methyl ester (Cys-200). Residue Cys-200 is the site of S-geranylgeranyl cysteine attachment. A propeptide spans 201–203 (VIL) (removed in mature form).

This sequence belongs to the small GTPase superfamily. Rho family.

It is found in the membrane. In terms of biological role, required for cell separation. Involved in the regulation of the septum degradation during cytokinesis and in the organization of F-actin patches and cytoplasmic microtubules. The chain is GTP-binding protein rho4 (rho4) from Schizosaccharomyces pombe (strain 972 / ATCC 24843) (Fission yeast).